A 567-amino-acid chain; its full sequence is Dihydroxy-acid dehydratase (567 aa).

Cys52 provides a ligand contact to [2Fe-2S] cluster. Mg(2+) is bound at residue Asp84. Residue Cys125 participates in [2Fe-2S] cluster binding. 2 residues coordinate Mg(2+): Asp126 and Lys127. Lys127 bears the N6-carboxylysine mark. Cys197 is a binding site for [2Fe-2S] cluster. A Mg(2+)-binding site is contributed by Glu448. Ser474 acts as the Proton acceptor in catalysis.

Belongs to the IlvD/Edd family. In terms of assembly, homodimer. Requires [2Fe-2S] cluster as cofactor. The cofactor is Mg(2+).

The catalysed reaction is (2R)-2,3-dihydroxy-3-methylbutanoate = 3-methyl-2-oxobutanoate + H2O. It catalyses the reaction (2R,3R)-2,3-dihydroxy-3-methylpentanoate = (S)-3-methyl-2-oxopentanoate + H2O. It functions in the pathway amino-acid biosynthesis; L-isoleucine biosynthesis; L-isoleucine from 2-oxobutanoate: step 3/4. It participates in amino-acid biosynthesis; L-valine biosynthesis; L-valine from pyruvate: step 3/4. Its function is as follows. Functions in the biosynthesis of branched-chain amino acids. Catalyzes the dehydration of (2R,3R)-2,3-dihydroxy-3-methylpentanoate (2,3-dihydroxy-3-methylvalerate) into 2-oxo-3-methylpentanoate (2-oxo-3-methylvalerate) and of (2R)-2,3-dihydroxy-3-methylbutanoate (2,3-dihydroxyisovalerate) into 2-oxo-3-methylbutanoate (2-oxoisovalerate), the penultimate precursor to L-isoleucine and L-valine, respectively. The polypeptide is Dihydroxy-acid dehydratase (Streptococcus pneumoniae serotype 2 (strain D39 / NCTC 7466)).